The chain runs to 404 residues: S-adenosylmethionine synthase (404 aa).

Residue 139-144 (GKGSSD) participates in ATP binding.

Belongs to the AdoMet synthase 2 family. Requires Mg(2+) as cofactor.

The enzyme catalyses L-methionine + ATP + H2O = S-adenosyl-L-methionine + phosphate + diphosphate. Its pathway is amino-acid biosynthesis; S-adenosyl-L-methionine biosynthesis; S-adenosyl-L-methionine from L-methionine: step 1/1. Catalyzes the formation of S-adenosylmethionine from methionine and ATP. This Saccharolobus solfataricus (strain ATCC 35092 / DSM 1617 / JCM 11322 / P2) (Sulfolobus solfataricus) protein is S-adenosylmethionine synthase.